A 118-amino-acid chain; its full sequence is Ribosome-binding factor A (118 aa).

The protein belongs to the RbfA family. Monomer. Binds 30S ribosomal subunits, but not 50S ribosomal subunits or 70S ribosomes.

Its subcellular location is the cytoplasm. One of several proteins that assist in the late maturation steps of the functional core of the 30S ribosomal subunit. Associates with free 30S ribosomal subunits (but not with 30S subunits that are part of 70S ribosomes or polysomes). Required for efficient processing of 16S rRNA. May interact with the 5'-terminal helix region of 16S rRNA. This Shouchella clausii (strain KSM-K16) (Alkalihalobacillus clausii) protein is Ribosome-binding factor A.